A 142-amino-acid polypeptide reads, in one-letter code: MAKKIDGYIKLQVPAGKANPSPPIGPALGQRGVNIMAFCKEFNAATQKLEVGLPIPVVITVYNDKSFTFIMKTPPASILLKKAAGIQKGSSVPNKTKVGKLTRAQLEEIATTKEPDLTGADLDARVRTIAGSARSMGLEVEL.

It belongs to the universal ribosomal protein uL11 family. Part of the ribosomal stalk of the 50S ribosomal subunit. Interacts with L10 and the large rRNA to form the base of the stalk. L10 forms an elongated spine to which L12 dimers bind in a sequential fashion forming a multimeric L10(L12)X complex. In terms of processing, one or more lysine residues are methylated.

Its function is as follows. Forms part of the ribosomal stalk which helps the ribosome interact with GTP-bound translation factors. The chain is Large ribosomal subunit protein uL11 from Acinetobacter baylyi (strain ATCC 33305 / BD413 / ADP1).